Consider the following 205-residue polypeptide: Arginine exporter protein ArgO (205 aa).

6 helical membrane-spanning segments follow: residues methionine 1–proline 21, leucine 42–leucine 62, leucine 67–alanine 87, isoleucine 111–valine 131, tryptophan 147–alanine 167, and valine 182–glycine 202.

It belongs to the LysE/ArgO transporter (TC 2.A.75) family.

Its subcellular location is the cell inner membrane. The catalysed reaction is L-arginine(in) = L-arginine(out). In terms of biological role, involved in the export of arginine. Important to control the intracellular level of arginine and the correct balance between arginine and lysine. The sequence is that of Arginine exporter protein ArgO from Yersinia enterocolitica serotype O:8 / biotype 1B (strain NCTC 13174 / 8081).